A 208-amino-acid chain; its full sequence is ATP-dependent Clp protease proteolytic subunit (208 aa).

Residue serine 98 is the Nucleophile of the active site. Residue histidine 123 is part of the active site.

This sequence belongs to the peptidase S14 family. Fourteen ClpP subunits assemble into 2 heptameric rings which stack back to back to give a disk-like structure with a central cavity, resembling the structure of eukaryotic proteasomes.

The protein localises to the cytoplasm. It catalyses the reaction Hydrolysis of proteins to small peptides in the presence of ATP and magnesium. alpha-casein is the usual test substrate. In the absence of ATP, only oligopeptides shorter than five residues are hydrolyzed (such as succinyl-Leu-Tyr-|-NHMec, and Leu-Tyr-Leu-|-Tyr-Trp, in which cleavage of the -Tyr-|-Leu- and -Tyr-|-Trp bonds also occurs).. Its function is as follows. Cleaves peptides in various proteins in a process that requires ATP hydrolysis. Has a chymotrypsin-like activity. Plays a major role in the degradation of misfolded proteins. The protein is ATP-dependent Clp protease proteolytic subunit of Wolbachia sp. subsp. Drosophila simulans (strain wRi).